A 688-amino-acid chain; its full sequence is Chaperone protein dnaK1 (688 aa).

Position 198 is a phosphothreonine; by autocatalysis (Thr-198). Residues 630–661 (DLPRDSYRERDAYNNRDYGRDYGRDYGRDSRP) show a composition bias toward basic and acidic residues. The tract at residues 630–688 (DLPRDSYRERDAYNNRDYGRDYGRDYGRDSRPSYDNSRPPRKSPRPSYQDNWDDDDDWL) is disordered.

The protein belongs to the heat shock protein 70 family.

Functionally, acts as a chaperone. The polypeptide is Chaperone protein dnaK1 (dnaK1) (Nostoc sp. (strain PCC 7120 / SAG 25.82 / UTEX 2576)).